Consider the following 57-residue polypeptide: Large ribosomal subunit protein bL32c (57 aa).

The protein belongs to the bacterial ribosomal protein bL32 family.

It is found in the plastid. The protein localises to the chloroplast. In Liriodendron tulipifera (Tuliptree), this protein is Large ribosomal subunit protein bL32c.